We begin with the raw amino-acid sequence, 100 residues long: Small ribosomal subunit protein uS14c (100 aa).

Belongs to the universal ribosomal protein uS14 family. In terms of assembly, part of the 30S ribosomal subunit.

Its subcellular location is the plastid. It is found in the chloroplast. Functionally, binds 16S rRNA, required for the assembly of 30S particles. The protein is Small ribosomal subunit protein uS14c of Lobularia maritima (Sweet alyssum).